A 309-amino-acid polypeptide reads, in one-letter code: Ribosomal RNA small subunit methyltransferase H (309 aa).

S-adenosyl-L-methionine is bound by residues 30 to 32, D50, F74, D96, and Q103; that span reads GGH.

It belongs to the methyltransferase superfamily. RsmH family.

It is found in the cytoplasm. It carries out the reaction cytidine(1402) in 16S rRNA + S-adenosyl-L-methionine = N(4)-methylcytidine(1402) in 16S rRNA + S-adenosyl-L-homocysteine + H(+). Functionally, specifically methylates the N4 position of cytidine in position 1402 (C1402) of 16S rRNA. This chain is Ribosomal RNA small subunit methyltransferase H, found in Wigglesworthia glossinidia brevipalpis.